The primary structure comprises 57 residues: Potassium channel toxin alpha-KTx 4.2 (57 aa).

A signal peptide spans 1-20 (MKVLYGILIIFILCSMFYLS). A propeptide spans 21–22 (QE) (removed by a carboxypeptidase). Disulfide bonds link Cys29–Cys50, Cys35–Cys55, and Cys39–Cys57.

Belongs to the short scorpion toxin superfamily. Potassium channel inhibitor family. Alpha-KTx 04 subfamily. As to expression, expressed by the venom gland.

It localises to the secreted. Blocker for small-conductance calcium-activated potassium channels KCa2.2/KCNN2 (Kd=80 nM) and KCa2.3/KCNN3 (Kd=197 nM) and ERG1/Kv11.1/KCNH2 potassium channels (53% inhibition at 5 uM). Has also been shown to inhibit Kv1.1/KCNA1 and Nav1.7/SCN9A with a moderate potency, as well as Kv11.1/KCNH2/ERG1 and Kv1.2/KCNA2 with a low potency. The protein is Potassium channel toxin alpha-KTx 4.2 of Tityus serrulatus (Brazilian scorpion).